Here is a 202-residue protein sequence, read N- to C-terminus: Nuclear transcription factor Y subunit C-6 (202 aa).

The span at 1-16 shows a compositional bias: low complexity; the sequence is MAENNNNNGDNMNNDN. 2 disordered regions span residues 1–29 and 180–202; these read MAEN…LPPM and AWPA…GGGN. Residues 17–29 show a composition bias toward polar residues; sequence HQQPPSYSQLPPM.

This sequence belongs to the NFYC/HAP5 subunit family. As to quaternary structure, heterotrimeric transcription factor composed of three components, NF-YA, NF-YB and NF-YC. NF-YB and NF-YC must interact and dimerize for NF-YA association and DNA binding. Expressed in flowers and siliques.

The protein resides in the nucleus. Functionally, stimulates the transcription of various genes by recognizing and binding to a CCAAT motif in promoters. This Arabidopsis thaliana (Mouse-ear cress) protein is Nuclear transcription factor Y subunit C-6 (NFYC6).